The sequence spans 424 residues: Anaerobic glycerol-3-phosphate dehydrogenase subunit B (424 aa).

This sequence belongs to the anaerobic G-3-P dehydrogenase subunit B family. In terms of assembly, composed of a catalytic GlpA/B dimer and of membrane bound GlpC. FMN serves as cofactor.

The catalysed reaction is a quinone + sn-glycerol 3-phosphate = dihydroxyacetone phosphate + a quinol. It participates in polyol metabolism; glycerol degradation via glycerol kinase pathway; glycerone phosphate from sn-glycerol 3-phosphate (anaerobic route): step 1/1. Its function is as follows. Conversion of glycerol 3-phosphate to dihydroxyacetone. Uses fumarate or nitrate as electron acceptor. The sequence is that of Anaerobic glycerol-3-phosphate dehydrogenase subunit B from Yersinia enterocolitica serotype O:8 / biotype 1B (strain NCTC 13174 / 8081).